The sequence spans 211 residues: ATP phosphoribosyltransferase (211 aa).

This sequence belongs to the ATP phosphoribosyltransferase family. Short subfamily. Heteromultimer composed of HisG and HisZ subunits.

The protein resides in the cytoplasm. The catalysed reaction is 1-(5-phospho-beta-D-ribosyl)-ATP + diphosphate = 5-phospho-alpha-D-ribose 1-diphosphate + ATP. Its pathway is amino-acid biosynthesis; L-histidine biosynthesis; L-histidine from 5-phospho-alpha-D-ribose 1-diphosphate: step 1/9. Catalyzes the condensation of ATP and 5-phosphoribose 1-diphosphate to form N'-(5'-phosphoribosyl)-ATP (PR-ATP). Has a crucial role in the pathway because the rate of histidine biosynthesis seems to be controlled primarily by regulation of HisG enzymatic activity. This is ATP phosphoribosyltransferase from Ectopseudomonas mendocina (strain ymp) (Pseudomonas mendocina).